A 504-amino-acid polypeptide reads, in one-letter code: Topoisomerase I damage affected protein 11 (504 aa).

Residues 32–62 (RKTGRKIRSASSNGYRLEHHRTSSAGSMHSQ) form a disordered region. Positions 179–231 (ALLQSLATKELELLECKQKIEDLKKQTQHEEQNYTRRARELHELKEQVSKHLD) form a coiled coil. At T236 the chain carries Phosphothreonine. 2 positions are modified to phosphoserine: S244 and S286. 3 disordered regions span residues 252-306 (LESR…SKQS), 332-377 (WDDS…SVSR), and 400-504 (DVIT…MTDF). A compositionally biased stretch (polar residues) spans 257–287 (ENAGNSSLPSSVSKPKNMGHQSTNQSRSVSP). Basic and acidic residues predominate over residues 290 to 301 (IQERRQRDDSSD). 2 stretches are compositionally biased toward polar residues: residues 332–359 (WDDS…QQYD) and 368–377 (KSPSQGSVSR). A compositionally biased stretch (basic and acidic residues) spans 403-421 (TDNRCDPVYKSDRQHEQKK). Basic residues predominate over residues 470-479 (TREKKSKRSS). Over residues 491–504 (DNSSVKNSVEMTDF) the composition is skewed to polar residues.

It belongs to the TDA11 family.

It is found in the cytoplasm. The protein is Topoisomerase I damage affected protein 11 (TDA11) of Saccharomyces cerevisiae (strain Lalvin EC1118 / Prise de mousse) (Baker's yeast).